A 442-amino-acid polypeptide reads, in one-letter code: MIKAIKGFNDILPAQSAKWLYLESILADVLGRYGYEHIRLPIVEQTDLFARAIGGATDIVEKEMYSFTDKSDPPTPLTLRPEGTAGAVRAVNEHNLLRGDTPKLWYIGPMFRYERPQKGRYRQFHQLGVESFGSALPDADAELIAMTHLMWQELGLKDEMRLQLNSLGERDERHAYREALVTYLTDKQEQLDEDSKRRLTTNPLRILDSKEASTQALLIDAPKLANFLGEESVAHFEQVQTYLTELGIDFEINPHLVRGLDYYNKTVFEWVTDKLGSQATVCAGGRYDGLVGQLKSIDTRDAKADAKADAKADSKPVKSEPAVGFAMGLERLLLLIDAVAPIADIPACDVFVVAHPEVYSAGIGYAQNLRYSRPDLRVKMASATSLKAQMKKADKSGAALTVIIAQQEIDDKTISIKDMQTGEQKTAAQDWLSDKDNFCRRK.

It belongs to the class-II aminoacyl-tRNA synthetase family. As to quaternary structure, homodimer.

The protein localises to the cytoplasm. The enzyme catalyses tRNA(His) + L-histidine + ATP = L-histidyl-tRNA(His) + AMP + diphosphate + H(+). In Psychrobacter arcticus (strain DSM 17307 / VKM B-2377 / 273-4), this protein is Histidine--tRNA ligase.